Reading from the N-terminus, the 410-residue chain is Homeobox protein Hox-A3a (410 aa).

The segment at 79–126 (VTDTSDNKQPPTAPSGPSSPSSLNQIPNIDSAAKNPVHVSPTPSTRKH) is disordered. Positions 127–132 (IFPWMK) match the Antp-type hexapeptide motif. A DNA-binding region (homeobox) is located at residues 163–222 (SKRARTAYTSAQLVELEKEFHFNRYLCRPRRVEMANLLNLTERQIKIWFQNRRMKYKKDQ). Residues 222–249 (QKGLGMMPSPGAQSPHSPVSLSSGGGGG) are disordered.

The protein belongs to the Antp homeobox family.

It localises to the nucleus. Functionally, sequence-specific transcription factor which is part of a developmental regulatory system that provides cells with specific positional identities on the anterior-posterior axis. The sequence is that of Homeobox protein Hox-A3a (hoxa3a) from Danio rerio (Zebrafish).